The sequence spans 307 residues: Ornithine carbamoyltransferase (307 aa).

Carbamoyl phosphate-binding positions include 53-56 (STRT), Q80, R104, and 131-134 (HPCQ). Residues N162, D219, and 223–224 (SM) each bind L-ornithine. Carbamoyl phosphate is bound by residues 259–260 (CL) and R287.

Belongs to the aspartate/ornithine carbamoyltransferase superfamily. OTCase family.

It is found in the cytoplasm. The enzyme catalyses carbamoyl phosphate + L-ornithine = L-citrulline + phosphate + H(+). The protein operates within amino-acid biosynthesis; L-arginine biosynthesis; L-arginine from L-ornithine and carbamoyl phosphate: step 1/3. Its function is as follows. Reversibly catalyzes the transfer of the carbamoyl group from carbamoyl phosphate (CP) to the N(epsilon) atom of ornithine (ORN) to produce L-citrulline. This is Ornithine carbamoyltransferase from Psychrobacter arcticus (strain DSM 17307 / VKM B-2377 / 273-4).